The sequence spans 403 residues: tRNA methyltransferase 10 homolog C (403 aa).

A mitochondrion-targeting transit peptide spans 1-39 (MAAFLKMSVSVNFFRPFTRFLVPFTLHRKRNNLTILQRY). Ser84 bears the Phosphoserine mark. A coiled-coil region spans residues 138 to 169 (TKEKVKKARQIKKEMKAAAREEAKNIKLLETT). The 193-residue stretch at 191–383 (MGWKGAQAMQ…QFVPKRKHTG (193 aa)) folds into the SAM-dependent MTase TRM10-type domain.

The protein belongs to the class IV-like SAM-binding methyltransferase superfamily. TRM10 family. In terms of assembly, component of mitochondrial ribonuclease P, a complex composed of TRMT10C/MRPP1, HSD17B10/MRPP2 and PRORP/MRPP3. Interacts with HSD17B10/MRPP2; forming the MRPP1-MRPP2 subcomplex of the mitochondrial ribonuclease P complex. Interacts with GRSF1.

Its subcellular location is the mitochondrion matrix. The protein resides in the mitochondrion nucleoid. The enzyme catalyses adenosine(9) in tRNA + S-adenosyl-L-methionine = N(1)-methyladenosine(9) in tRNA + S-adenosyl-L-homocysteine + H(+). It catalyses the reaction guanosine(9) in tRNA + S-adenosyl-L-methionine = N(1)-methylguanosine(9) in tRNA + S-adenosyl-L-homocysteine + H(+). The catalysed reaction is an adenosine in mRNA + S-adenosyl-L-methionine = an N(1)-methyladenosine in mRNA + S-adenosyl-L-homocysteine + H(+). Functionally, mitochondrial tRNA N(1)-methyltransferase involved in mitochondrial tRNA maturation. Component of mitochondrial ribonuclease P, a complex composed of TRMT10C/MRPP1, HSD17B10/MRPP2 and PRORP/MRPP3, which cleaves tRNA molecules in their 5'-ends. Together with HSD17B10/MRPP2, forms a subcomplex of the mitochondrial ribonuclease P, named MRPP1-MRPP2 subcomplex, which displays functions that are independent of the ribonuclease P activity. The MRPP1-MRPP2 subcomplex catalyzes the formation of N(1)-methylguanine and N(1)-methyladenine at position 9 (m1G9 and m1A9, respectively) in tRNAs; TRMT10C/MRPP1 acting as the catalytic N(1)-methyltransferase subunit. The MRPP1-MRPP2 subcomplex also acts as a tRNA maturation platform: following 5'-end cleavage by the mitochondrial ribonuclease P complex, the MRPP1-MRPP2 subcomplex enhances the efficiency of 3'-processing catalyzed by ELAC2, retains the tRNA product after ELAC2 processing and presents the nascent tRNA to the mitochondrial CCA tRNA nucleotidyltransferase TRNT1 enzyme. In addition to tRNA N(1)-methyltransferase activity, TRMT10C/MRPP1 also acts as a mRNA N(1)-methyltransferase by mediating methylation of adenosine residues at the N(1) position of MT-ND5 mRNA. Associates with mitochondrial DNA complexes at the nucleoids to initiate RNA processing and ribosome assembly. The sequence is that of tRNA methyltransferase 10 homolog C from Homo sapiens (Human).